A 172-amino-acid chain; its full sequence is NADH-ubiquinone oxidoreductase chain 6 (172 aa).

The next 4 helical transmembrane spans lie at 1-21 (MNNY…GLAL), 38-58 (VGCL…VFLI), 86-106 (WLIL…ICVL), and 147-167 (CATW…FIII).

It belongs to the complex I subunit 6 family. In terms of assembly, core subunit of respiratory chain NADH dehydrogenase (Complex I) which is composed of 45 different subunits.

The protein localises to the mitochondrion inner membrane. The catalysed reaction is a ubiquinone + NADH + 5 H(+)(in) = a ubiquinol + NAD(+) + 4 H(+)(out). In terms of biological role, core subunit of the mitochondrial membrane respiratory chain NADH dehydrogenase (Complex I) which catalyzes electron transfer from NADH through the respiratory chain, using ubiquinone as an electron acceptor. Essential for the catalytic activity and assembly of complex I. The chain is NADH-ubiquinone oxidoreductase chain 6 (Mtnd6) from Mus musculus (Mouse).